A 161-amino-acid chain; its full sequence is Arginine repressor (161 aa).

Belongs to the ArgR family.

Its subcellular location is the cytoplasm. The protein operates within amino-acid biosynthesis; L-arginine biosynthesis [regulation]. Its function is as follows. Regulates arginine biosynthesis genes. The protein is Arginine repressor of Corynebacterium aurimucosum (strain ATCC 700975 / DSM 44827 / CIP 107346 / CN-1) (Corynebacterium nigricans).